We begin with the raw amino-acid sequence, 555 residues long: MTHLSDLDIANQSTLQPIKDIAASVGISEDALEPYGHYKAKIDINKITPRENKGKVVLVTAMSPTPAGEGKSTVTVGLADAFHELNKNVMVALREPALGPTFGIKGGATGGGYAQVLPMEDINLHFNGDFHAITTANNALSAFIDNHIHQGNELGIDQRRIEWKRVLDMNDRALRHVNVGLGGPTNGVPREDGFNITVASEIMAILCLSRSIKDLKDKISRITIGYTRDRKPVTVADLKVQGALAMILKDAIKPNLVQSIEGTPALVHGGPFANIAHGCNSILATETARDLADIVVTEAGFGSDLGAEKFMDIKAREAGFDLAAVVVVATIRALKMHGGVAKDNLKEENVEAVKAGIVNLERHVNNIKKFGVEPVVAINAFIHDTDAEVEYVKSWAKENNVRIALTEVWEKGGKGGVDLANEVLEVIDQPNSFKPLYELELPLEQKIEKIVTEIYGGSKVTFSSKAQKQLKQFKENGWDNYPVCMAKTQYSFSDDQTLLGAPSGFEITIRELEAKTGAGFIVALTGAIMTMPGLPKKPAALNMDVTDDGHAIGLF.

65–72 (TPAGEGKS) contributes to the ATP binding site.

The protein belongs to the formate--tetrahydrofolate ligase family.

The enzyme catalyses (6S)-5,6,7,8-tetrahydrofolate + formate + ATP = (6R)-10-formyltetrahydrofolate + ADP + phosphate. The protein operates within one-carbon metabolism; tetrahydrofolate interconversion. In Staphylococcus aureus (strain Mu3 / ATCC 700698), this protein is Formate--tetrahydrofolate ligase.